The primary structure comprises 85 residues: U4-theraphotoxin-Hhn1g (85 aa).

The N-terminal stretch at 1–22 (MKVTLIAILTCAAVLVLHTTAA) is a signal peptide. A propeptide spanning residues 23 to 48 (EELEAESQLMEVGMPDTELAAVDEER) is cleaved from the precursor. Cystine bridges form between cysteine 52–cysteine 66, cysteine 56–cysteine 77, and cysteine 71–cysteine 82.

Belongs to the neurotoxin 12 (Hwtx-2) family. 02 (Hwtx-2) subfamily. Expressed by the venom gland.

The protein localises to the secreted. Functionally, postsynaptic neurotoxin. The protein is U4-theraphotoxin-Hhn1g of Cyriopagopus hainanus (Chinese bird spider).